The sequence spans 86 residues: Synergistic-like venom protein (86 aa).

The signal sequence occupies residues 1–21 (MKTLLLTLVVVTIVCLDLGYT). 4 disulfide bridges follow: Cys24-Cys45, Cys38-Cys63, Cys67-Cys78, and Cys79-Cys84.

The protein belongs to the three-finger toxin family. Short-chain subfamily. Aminergic toxin sub-subfamily. Expressed by the venom gland.

Its subcellular location is the secreted. This Dendroaspis angusticeps (Eastern green mamba) protein is Synergistic-like venom protein.